Reading from the N-terminus, the 531-residue chain is Bifunctional protein TrpGD (531 aa).

Residues 3–196 (DILLLDNIDS…LAWAQQKLEP (194 aa)) enclose the Glutamine amidotransferase type-1 domain. Residue 57-59 (GPG) participates in L-glutamine binding. Cysteine 84 acts as the Nucleophile; for GATase activity in catalysis. L-glutamine contacts are provided by residues glutamine 88 and 134–135 (SL). Catalysis depends on for GATase activity residues histidine 170 and glutamate 172. Residues 202–531 (PILEKLYQAQ…DRVTALAARG (330 aa)) are anthranilate phosphoribosyltransferase.

It in the C-terminal section; belongs to the anthranilate phosphoribosyltransferase family. Heterotetramer consisting of two non-identical subunits: a beta subunit (TrpG) and a large alpha subunit (TrpE).

It carries out the reaction chorismate + L-glutamine = anthranilate + pyruvate + L-glutamate + H(+). The catalysed reaction is N-(5-phospho-beta-D-ribosyl)anthranilate + diphosphate = 5-phospho-alpha-D-ribose 1-diphosphate + anthranilate. It functions in the pathway amino-acid biosynthesis; L-tryptophan biosynthesis; L-tryptophan from chorismate: step 1/5. The protein operates within amino-acid biosynthesis; L-tryptophan biosynthesis; L-tryptophan from chorismate: step 2/5. With respect to regulation, cooperatively feedback inhibited by tryptophan. Functionally, part of a heterotetrameric complex that catalyzes the two-step biosynthesis of anthranilate, an intermediate in the biosynthesis of L-tryptophan. In the first step, the glutamine-binding beta subunit (TrpG) of anthranilate synthase (AS) provides the glutamine amidotransferase activity which generates ammonia as a substrate that, along with chorismate, is used in the second step, catalyzed by the large alpha subunit of AS (TrpE) to produce anthranilate. In the absence of TrpG, TrpE can synthesize anthranilate directly from chorismate and high concentrations of ammonia. In addition to synthesizing anthranilate, it also catalyzes the second step of the pathway, the transfer of the phosphoribosyl group of 5-phosphorylribose-1-pyrophosphate (PRPP) to anthranilate. The sequence is that of Bifunctional protein TrpGD (trpGD) from Escherichia coli (strain K12).